A 334-amino-acid polypeptide reads, in one-letter code: Transmembrane protein 41 homolog (334 aa).

N-linked (GlcNAc...) asparagine glycosylation is present at Asn-43. The disordered stretch occupies residues 47–79 (KNKNNNIDNKKNSNNNNNNNNNNNNKNSISNNN). Asn-83 carries an N-linked (GlcNAc...) asparagine glycan. Transmembrane regions (helical) follow at residues 97 to 117 (LPLW…VFLF), 156 to 176 (FIVI…SIPG), 192 to 214 (VGFP…ISYY), 246 to 266 (IVFL…ASPL), 269 to 289 (VPIH…TFLA), and 305 to 325 (IFDL…ILPT).

It belongs to the TMEM41 family.

The protein resides in the membrane. The protein is Transmembrane protein 41 homolog of Dictyostelium discoideum (Social amoeba).